The sequence spans 54 residues: Protein P32 (54 aa).

A helical transmembrane segment spans residues 4–24 (FGKTLITIVTAIIGVAIIAVI).

Its subcellular location is the virion membrane. In terms of biological role, component of the phage injection machinery. Required for DNA injection in the membrane transformation event. Involved in the formation of the membrane tail tube to connect the virus interior with the host cytosol. Essential for viral infectivity. The chain is Protein P32 (XXXII) from Enterobacteria phage PRD1 (Bacteriophage PRD1).